The following is a 283-amino-acid chain: Pantothenate synthetase (283 aa).

30 to 37 (MGNLHDGH) is an ATP binding site. His37 functions as the Proton donor in the catalytic mechanism. Gln61 is a binding site for (R)-pantoate. Position 61 (Gln61) interacts with beta-alanine. Residue 149–152 (GEKD) participates in ATP binding. Gln155 serves as a coordination point for (R)-pantoate. ATP is bound by residues Met178 and 186 to 189 (LSSR).

It belongs to the pantothenate synthetase family. Homodimer.

Its subcellular location is the cytoplasm. It catalyses the reaction (R)-pantoate + beta-alanine + ATP = (R)-pantothenate + AMP + diphosphate + H(+). Its pathway is cofactor biosynthesis; (R)-pantothenate biosynthesis; (R)-pantothenate from (R)-pantoate and beta-alanine: step 1/1. Its activity is regulated as follows. Activation requires a combination of a divalent cation, magnesium or manganese, and a monovalent cation, potassium or ammonium. Above the optimum concentration for activation, magnesium and manganese are rather inhibitory. Also activated by 2-mercaptoethanol, dithiothreitol, cysteine and glutathione. Inhibited by divalent cations (mercury, cobalt, zinc, copper, silver), chelating agents (EDTA, EGTA and o-phenanthroline), and analogs of beta-alanine (taurine, gamma-aminobutyrate, gamma-amino-beta-hydroxybutyrate). Catalyzes the condensation of pantoate with beta-alanine in an ATP-dependent reaction via a pantoyl-adenylate intermediate. In Escherichia coli (strain K12), this protein is Pantothenate synthetase (panC).